Here is a 245-residue protein sequence, read N- to C-terminus: 2,3-bisphosphoglycerate-dependent phosphoglycerate mutase (245 aa).

Substrate is bound by residues 8–15, 21–22, Arg-60, 87–90, Lys-98, 114–115, and 183–184; these read RHGQSLWN, TG, ERHY, RR, and GN. His-9 serves as the catalytic Tele-phosphohistidine intermediate. The Proton donor/acceptor role is filled by Glu-87.

It belongs to the phosphoglycerate mutase family. BPG-dependent PGAM subfamily.

It carries out the reaction (2R)-2-phosphoglycerate = (2R)-3-phosphoglycerate. The protein operates within carbohydrate degradation; glycolysis; pyruvate from D-glyceraldehyde 3-phosphate: step 3/5. Its function is as follows. Catalyzes the interconversion of 2-phosphoglycerate and 3-phosphoglycerate. In Bacillus cereus (strain B4264), this protein is 2,3-bisphosphoglycerate-dependent phosphoglycerate mutase.